The chain runs to 323 residues: NADH-ubiquinone oxidoreductase chain 1 (323 aa).

9 consecutive transmembrane segments (helical) span residues 10–30, 52–72, 84–104, 119–139, 157–177, 189–209, 245–265, 268–288, and 302–322; these read LLYI…GLLI, PNVV…KLVL, IIYA…WSVI, VIFI…AGWA, VSYE…AGTV, VWFI…ALAE, YANI…GIVS, ISGA…RATL, and KSLL…VLII.

It belongs to the complex I subunit 1 family.

It is found in the mitochondrion inner membrane. The enzyme catalyses a ubiquinone + NADH + 5 H(+)(in) = a ubiquinol + NAD(+) + 4 H(+)(out). In terms of biological role, core subunit of the mitochondrial membrane respiratory chain NADH dehydrogenase (Complex I) that is believed to belong to the minimal assembly required for catalysis. Complex I functions in the transfer of electrons from NADH to the respiratory chain. The immediate electron acceptor for the enzyme is believed to be ubiquinone. The polypeptide is NADH-ubiquinone oxidoreductase chain 1 (nad1) (Dictyostelium citrinum (Slime mold)).